A 416-amino-acid chain; its full sequence is Tyrosine--tRNA ligase (416 aa).

Tyr-37 contributes to the L-tyrosine binding site. Residues Pro-42–Asn-51 carry the 'HIGH' region motif. Residues Tyr-176 and Gln-180 each coordinate L-tyrosine. A 'KMSKS' region motif is present at residues Lys-236–Ser-240. Lys-239 contacts ATP. One can recognise an S4 RNA-binding domain in the interval Leu-350–Val-416.

The protein belongs to the class-I aminoacyl-tRNA synthetase family. TyrS type 1 subfamily. Homodimer.

It localises to the cytoplasm. It carries out the reaction tRNA(Tyr) + L-tyrosine + ATP = L-tyrosyl-tRNA(Tyr) + AMP + diphosphate + H(+). In terms of biological role, catalyzes the attachment of tyrosine to tRNA(Tyr) in a two-step reaction: tyrosine is first activated by ATP to form Tyr-AMP and then transferred to the acceptor end of tRNA(Tyr). This chain is Tyrosine--tRNA ligase, found in Gluconobacter oxydans (strain 621H) (Gluconobacter suboxydans).